A 214-amino-acid polypeptide reads, in one-letter code: GTP-binding nuclear protein GSP1 (214 aa).

The Small GTPase Ran-type domain occupies 4-172 (RELTYKICLI…LHLARIFTGR (169 aa)). 17 to 22 (GVGKTT) lines the GTP pocket. The segment at 34 to 42 (KNYNATVGA) is switch-I. Residues G66, 121 to 124 (NKID), and 151 to 153 (SAK) each bind GTP. The tract at residues 66-82 (GQEKKAVLKDVYYIGAS) is switch-II.

The protein belongs to the small GTPase superfamily. Ran family. Found in a nuclear export complex with RanGTP, exportin and pre-miRNA.

It localises to the nucleus. GTP-binding protein involved in nucleocytoplasmic transport. Required for the import of protein into the nucleus and also for RNA export. The sequence is that of GTP-binding nuclear protein GSP1 (GSP1) from Encephalitozoon cuniculi (strain GB-M1) (Microsporidian parasite).